A 1286-amino-acid polypeptide reads, in one-letter code: DNA-directed RNA polymerase subunit beta' (1286 aa).

Zn(2+) contacts are provided by C58, C60, C73, and C76. 3 residues coordinate Mg(2+): D533, D535, and D537. Zn(2+)-binding residues include C867, C944, C951, and C954.

It belongs to the RNA polymerase beta' chain family. The RNAP catalytic core consists of 2 alpha, 1 beta, 1 beta' and 1 omega subunit. When a sigma factor is associated with the core the holoenzyme is formed, which can initiate transcription. Mg(2+) serves as cofactor. Zn(2+) is required as a cofactor.

It catalyses the reaction RNA(n) + a ribonucleoside 5'-triphosphate = RNA(n+1) + diphosphate. DNA-dependent RNA polymerase catalyzes the transcription of DNA into RNA using the four ribonucleoside triphosphates as substrates. The protein is DNA-directed RNA polymerase subunit beta' of Tropheryma whipplei (strain TW08/27) (Whipple's bacillus).